We begin with the raw amino-acid sequence, 630 residues long: 1-deoxy-D-xylulose-5-phosphate synthase (630 aa).

Thiamine diphosphate is bound by residues His-87 and 128-130 (GHS). Asp-159 contributes to the Mg(2+) binding site. Thiamine diphosphate is bound by residues 160–161 (GA), Asn-188, Phe-295, and Glu-377. Position 188 (Asn-188) interacts with Mg(2+).

This sequence belongs to the transketolase family. DXPS subfamily. As to quaternary structure, homodimer. Requires Mg(2+) as cofactor. Thiamine diphosphate is required as a cofactor.

It catalyses the reaction D-glyceraldehyde 3-phosphate + pyruvate + H(+) = 1-deoxy-D-xylulose 5-phosphate + CO2. Its pathway is metabolic intermediate biosynthesis; 1-deoxy-D-xylulose 5-phosphate biosynthesis; 1-deoxy-D-xylulose 5-phosphate from D-glyceraldehyde 3-phosphate and pyruvate: step 1/1. Its function is as follows. Catalyzes the acyloin condensation reaction between C atoms 2 and 3 of pyruvate and glyceraldehyde 3-phosphate to yield 1-deoxy-D-xylulose-5-phosphate (DXP). This Pseudomonas syringae pv. syringae (strain B728a) protein is 1-deoxy-D-xylulose-5-phosphate synthase.